A 98-amino-acid chain; its full sequence is Pore-forming peptide amoebapore A (98 aa).

The first 21 residues, Met1–Gln21, serve as a signal peptide directing secretion. The Saposin B-type domain occupies Gly22–Cys98. 3 disulfides stabilise this stretch: Cys26–Cys98, Cys29–Cys92, and Cys56–Cys67.

Monomer (at pH below 4 and pH above 6). Homodimer (at pH 4-6). Hexamer; formed during insertion in the membrane.

It is found in the cytoplasmic granule. Its function is as follows. Forms pores in the cell membrane of host cells. Has antibacterial activity against M.luteus, no activity against E.coli. Implicated in the cytolytic activity of the parasite. The chain is Pore-forming peptide amoebapore A from Entamoeba histolytica (strain ATCC 30459 / HM-1:IMSS / ABRM).